A 281-amino-acid polypeptide reads, in one-letter code: Probable endonuclease 4 (281 aa).

Residues His-69, His-109, Glu-145, Asp-179, His-182, His-216, Asp-229, His-231, and Glu-261 each contribute to the Zn(2+) site.

Belongs to the AP endonuclease 2 family. Requires Zn(2+) as cofactor.

It catalyses the reaction Endonucleolytic cleavage to 5'-phosphooligonucleotide end-products.. Functionally, endonuclease IV plays a role in DNA repair. It cleaves phosphodiester bonds at apurinic or apyrimidinic (AP) sites, generating a 3'-hydroxyl group and a 5'-terminal sugar phosphate. The sequence is that of Probable endonuclease 4 from Chlorobaculum parvum (strain DSM 263 / NCIMB 8327) (Chlorobium vibrioforme subsp. thiosulfatophilum).